The chain runs to 166 residues: Disulfide bond formation protein B (166 aa).

Topologically, residues Met1–Thr12 are cytoplasmic. Residues Ala13–Tyr29 form a helical membrane-spanning segment. Over Met30 to Ile47 the chain is Periplasmic. Cys39 and Cys42 are oxidised to a cystine. The helical transmembrane segment at Phe48–Pro64 threads the bilayer. At Ala65–Lys70 the chain is on the cytoplasmic side. Residues Val71 to Ala88 traverse the membrane as a helical segment. Topologically, residues Arg89–Gly145 are periplasmic. Cys104 and Cys131 form a disulfide bridge. The chain crosses the membrane as a helical span at residues Trp146–Arg164. The Cytoplasmic portion of the chain corresponds to Lys165–Ala166.

It belongs to the DsbB family.

Its subcellular location is the cell inner membrane. Required for disulfide bond formation in some periplasmic proteins. Acts by oxidizing the DsbA protein. This Saccharophagus degradans (strain 2-40 / ATCC 43961 / DSM 17024) protein is Disulfide bond formation protein B.